The following is a 264-amino-acid chain: Thymidylate synthase (264 aa).

Residues arginine 21 and 126–127 contribute to the dUMP site; that span reads RR. The Nucleophile role is filled by cysteine 146. DUMP is bound by residues 166–169, asparagine 177, and 207–209; these read RSAD and HLY. Aspartate 169 serves as a coordination point for (6R)-5,10-methylene-5,6,7,8-tetrahydrofolate. Alanine 263 contacts (6R)-5,10-methylene-5,6,7,8-tetrahydrofolate.

It belongs to the thymidylate synthase family. Bacterial-type ThyA subfamily. In terms of assembly, homodimer.

The protein localises to the cytoplasm. It catalyses the reaction dUMP + (6R)-5,10-methylene-5,6,7,8-tetrahydrofolate = 7,8-dihydrofolate + dTMP. It participates in pyrimidine metabolism; dTTP biosynthesis. Catalyzes the reductive methylation of 2'-deoxyuridine-5'-monophosphate (dUMP) to 2'-deoxythymidine-5'-monophosphate (dTMP) while utilizing 5,10-methylenetetrahydrofolate (mTHF) as the methyl donor and reductant in the reaction, yielding dihydrofolate (DHF) as a by-product. This enzymatic reaction provides an intracellular de novo source of dTMP, an essential precursor for DNA biosynthesis. The sequence is that of Thymidylate synthase from Rhodopseudomonas palustris (strain HaA2).